The sequence spans 54 residues: Hydrophobic protein RCI2B (54 aa).

The next 2 membrane-spanning stretches (helical) occupy residues 2 to 22 (STAT…GVFL) and 32 to 52 (ICLI…LYII).

It belongs to the UPF0057 (PMP3) family.

Its subcellular location is the membrane. This is Hydrophobic protein RCI2B (RCI2B) from Arabidopsis thaliana (Mouse-ear cress).